The following is a 208-amino-acid chain: Imidazoleglycerol-phosphate dehydratase (208 aa).

It belongs to the imidazoleglycerol-phosphate dehydratase family.

Its subcellular location is the cytoplasm. It carries out the reaction D-erythro-1-(imidazol-4-yl)glycerol 3-phosphate = 3-(imidazol-4-yl)-2-oxopropyl phosphate + H2O. It functions in the pathway amino-acid biosynthesis; L-histidine biosynthesis; L-histidine from 5-phospho-alpha-D-ribose 1-diphosphate: step 6/9. This chain is Imidazoleglycerol-phosphate dehydratase, found in Anaeromyxobacter dehalogenans (strain 2CP-1 / ATCC BAA-258).